Reading from the N-terminus, the 89-residue chain is Large ribosomal subunit protein bL31B (89 aa).

The interval 70–89 is disordered; that stretch reads RVQRFESRRRRRQQQSGEQG.

Belongs to the bacterial ribosomal protein bL31 family. Type B subfamily. Part of the 50S ribosomal subunit.

The chain is Large ribosomal subunit protein bL31B from Rubrobacter xylanophilus (strain DSM 9941 / JCM 11954 / NBRC 16129 / PRD-1).